The following is a 911-amino-acid chain: FIGNL1-interacting regulator of recombination and mitosis (911 aa).

The interval 830 to 853 (SEKSQPAQTPLTEEPCAKRARQET) is disordered. Positions 844 to 853 (PCAKRARQET) are enriched in basic and acidic residues.

Its subcellular location is the chromosome. It localises to the centromere. The protein resides in the kinetochore. It is found in the nucleus. The protein localises to the midbody. Its subcellular location is the cytoplasm. It localises to the cytoskeleton. The protein resides in the spindle. Functionally, may play a role in chromosome segregation. The chain is FIGNL1-interacting regulator of recombination and mitosis from Danio rerio (Zebrafish).